Reading from the N-terminus, the 433-residue chain is Ribosomal protein uS12 methylthiotransferase RimO (433 aa).

Positions 6 to 122 (QSIFLLSLGC…IISVLGGSYR (117 aa)) constitute an MTTase N-terminal domain. [4Fe-4S] cluster is bound by residues Cys15, Cys51, Cys85, Cys146, Cys150, and Cys153. Residues 132 to 362 (LTPPHYAWLK…MELQESIAAE (231 aa)) form the Radical SAM core domain. In terms of domain architecture, TRAM spans 365-432 (RELEGRVMKV…AYELHGRVND (68 aa)).

Belongs to the methylthiotransferase family. RimO subfamily. The cofactor is [4Fe-4S] cluster.

The protein localises to the cytoplasm. It carries out the reaction L-aspartate(89)-[ribosomal protein uS12]-hydrogen + (sulfur carrier)-SH + AH2 + 2 S-adenosyl-L-methionine = 3-methylsulfanyl-L-aspartate(89)-[ribosomal protein uS12]-hydrogen + (sulfur carrier)-H + 5'-deoxyadenosine + L-methionine + A + S-adenosyl-L-homocysteine + 2 H(+). In terms of biological role, catalyzes the methylthiolation of an aspartic acid residue of ribosomal protein uS12. The sequence is that of Ribosomal protein uS12 methylthiotransferase RimO from Prosthecochloris aestuarii (strain DSM 271 / SK 413).